We begin with the raw amino-acid sequence, 280 residues long: MKPFLRTRVYDGPVRAVVLDWAGTAVDHGCLGPAAVFVQAFALHGVEVAVSEAREPMGSEKREHVRRMLAMDSVAARWRAVHGHVPHEADVDAVYRDVEPLMLQTIAAHAVPVPGLAEFVDRVRGRGMGLGSCTGYTGPMMEVLVPEAARRGYSPDVVVHASEVPAGRPYPWMCYLNAMRLGVHPMESMVKIGDTVADMHEARNAGMWTVGVVRTGNDVGLSEVDAARMPPDQLAARMTVAAARLREAGAHYVVDSIADCFSVIKAIEARLARGDTPYPA.

Residue aspartate 20 is the Nucleophile of the active site. Mg(2+) is bound by residues aspartate 20 and alanine 22. Lysine 61 serves as the catalytic Schiff-base intermediate with substrate. Aspartate 194 contributes to the Mg(2+) binding site.

This sequence belongs to the HAD-like hydrolase superfamily. PhnX family. In terms of assembly, homodimer. Mg(2+) serves as cofactor.

It carries out the reaction phosphonoacetaldehyde + H2O = acetaldehyde + phosphate + H(+). In terms of biological role, involved in phosphonate degradation. This is Phosphonoacetaldehyde hydrolase from Nitratidesulfovibrio vulgaris (strain DSM 19637 / Miyazaki F) (Desulfovibrio vulgaris).